The primary structure comprises 402 residues: Phytoene synthase 2, chloroplastic (402 aa).

The transit peptide at 1–54 (MAAGSSAVWAAQHPACSGGKFHHLSPSHSHCRPRRALQTPPALPARRSGASPPR) directs the protein to the chloroplast. A compositionally biased stretch (basic residues) spans 20-35 (KFHHLSPSHSHCRPRR). Residues 20–54 (KFHHLSPSHSHCRPRRALQTPPALPARRSGASPPR) are disordered. The segment covering 44-54 (PARRSGASPPR) has biased composition (low complexity).

It belongs to the phytoene/squalene synthase family. Expressed in leaves and endosperm.

Its subcellular location is the plastid. The protein localises to the chloroplast. The protein resides in the plastoglobule. The enzyme catalyses 2 (2E,6E,10E)-geranylgeranyl diphosphate = 15-cis-phytoene + 2 diphosphate. In terms of biological role, catalyzes the conversion of geranylgeranyl diphosphate to phytoene. Mediates the first committed step in carotenoid biosynthesis. The protein is Phytoene synthase 2, chloroplastic of Zea mays (Maize).